We begin with the raw amino-acid sequence, 305 residues long: Orotidine 5'-phosphate decarboxylase (305 aa).

Lysine 108 functions as the Proton donor in the catalytic mechanism.

This sequence belongs to the OMP decarboxylase family. Type 2 subfamily.

It carries out the reaction orotidine 5'-phosphate + H(+) = UMP + CO2. Its pathway is pyrimidine metabolism; UMP biosynthesis via de novo pathway; UMP from orotate: step 2/2. The sequence is that of Orotidine 5'-phosphate decarboxylase from Caldicellulosiruptor bescii (strain ATCC BAA-1888 / DSM 6725 / KCTC 15123 / Z-1320) (Anaerocellum thermophilum).